Here is a 100-residue protein sequence, read N- to C-terminus: Urease subunit gamma (100 aa).

The protein belongs to the urease gamma subunit family. Heterotrimer of UreA (gamma), UreB (beta) and UreC (alpha) subunits. Three heterotrimers associate to form the active enzyme.

It localises to the cytoplasm. It catalyses the reaction urea + 2 H2O + H(+) = hydrogencarbonate + 2 NH4(+). It participates in nitrogen metabolism; urea degradation; CO(2) and NH(3) from urea (urease route): step 1/1. In Haemophilus influenzae (strain PittGG), this protein is Urease subunit gamma.